A 1423-amino-acid polypeptide reads, in one-letter code: uncharacterized protein (1423 aa).

The first 28 residues, 1–28, serve as a signal peptide directing secretion; that stretch reads MTSSVRLAFLATLLLLLPLEAQIQQANS. At 29–1321 the chain is on the extracellular side; the sequence is ANVNQNVGQQ…RSREKQNFLT (1293 aa). N-linked (GlcNAc...) asparagine glycosylation is found at Asn-94, Asn-306, Asn-355, Asn-483, Asn-666, and Asn-903. Residues 184 to 347 enclose the NIDO domain; sequence SFFGQSASKA…GRYMFRVDDV (164 aa). The region spanning 638–818 is the AMOP domain; that stretch reads VKKKSLEMCH…FRCQMFYWRR (181 aa). Residues 1322–1342 traverse the membrane as a helical segment; sequence WLAIIGGIFGVLVFVILIFLC. The Cytoplasmic portion of the chain corresponds to 1343–1423; that stretch reads CWIVKQKKKG…EDLHGLKTSV (81 aa). The segment at 1364–1401 is disordered; it reads SRSSMTGSRGGKKYPIHESEPLNEKRFDADTYRDDDFY. Residues 1378–1401 are compositionally biased toward basic and acidic residues; that stretch reads PIHESEPLNEKRFDADTYRDDDFY.

Its subcellular location is the membrane. This is an uncharacterized protein from Caenorhabditis elegans.